Consider the following 395-residue polypeptide: Elongation factor Tu (395 aa).

The tr-type G domain occupies 10 to 205; that stretch reads KPHVNVGTIG…VDNDIPIPPR (196 aa). The tract at residues 19 to 26 is G1; it reads GHVDHGKT. 19-26 is a binding site for GTP; sequence GHVDHGKT. T26 provides a ligand contact to Mg(2+). Residues 60 to 64 form a G2 region; the sequence is GITIN. The G3 stretch occupies residues 81 to 84; that stretch reads DCPG. Residues 81–85 and 136–139 contribute to the GTP site; these read DCPGH and NKVD. Residues 136–139 form a G4 region; sequence NKVD. Residues 174 to 176 form a G5 region; the sequence is SAL.

It belongs to the TRAFAC class translation factor GTPase superfamily. Classic translation factor GTPase family. EF-Tu/EF-1A subfamily. As to quaternary structure, monomer.

Its subcellular location is the cytoplasm. It catalyses the reaction GTP + H2O = GDP + phosphate + H(+). Functionally, GTP hydrolase that promotes the GTP-dependent binding of aminoacyl-tRNA to the A-site of ribosomes during protein biosynthesis. This is Elongation factor Tu from Cytophaga hutchinsonii (strain ATCC 33406 / DSM 1761 / CIP 103989 / NBRC 15051 / NCIMB 9469 / D465).